A 323-amino-acid polypeptide reads, in one-letter code: MPVHSREKKESNHEEMEVDFAEQEGSSSEDEDTESSSVSEDGESSEMDDEDCERRRMECIDEMTNLEKQFTDLKDQLYKERLNQVDAKLQEVMSGKAAEYLEPLATLQENMQIRTKVAGIYRELCLESVKNKYDCETQAAFQHWESEKLLLFDTVQTELEEKIRRLEEDRHSIDITSELWNDELQSRKNKKKDPFSPDKKKKPVVVSGPYIVYMLQDLDILEDWTAIRKAMATLGPHRVKTDASSKIDKLQHNARSEDGRLFYDGEWYSRGQAITIDKKDEYPTSAVITTINHDEVWFKRVDGSKSKLYVSQLQKGKYTVKHA.

The segment covering 1 to 15 has biased composition (basic and acidic residues); that stretch reads MPVHSREKKESNHEE. The segment at 1-52 is disordered; the sequence is MPVHSREKKESNHEEMEVDFAEQEGSSSEDEDTESSSVSEDGESSEMDDEDC. The span at 16–51 shows a compositional bias: acidic residues; sequence MEVDFAEQEGSSSEDEDTESSSVSEDGESSEMDDED. 2 coiled-coil regions span residues 50–81 and 156–178; these read EDCERRRMECIDEMTNLEKQFTDLKDQLYKER and QTELEEKIRRLEEDRHSIDITSE.

The protein belongs to the BRMS1 family.

Its subcellular location is the nucleus. Its function is as follows. Involved in the histone deacetylase (HDAC1)-dependent transcriptional repression activity. This chain is Breast cancer metastasis-suppressor 1-like protein-A (brms1la), found in Danio rerio (Zebrafish).